Reading from the N-terminus, the 324-residue chain is o-succinylbenzoate synthase (324 aa).

K135 serves as the catalytic Proton donor. Residues D163, E192, and D215 each contribute to the Mg(2+) site. The active-site Proton acceptor is K237.

This sequence belongs to the mandelate racemase/muconate lactonizing enzyme family. MenC type 1 subfamily. It depends on a divalent metal cation as a cofactor.

It carries out the reaction (1R,6R)-6-hydroxy-2-succinyl-cyclohexa-2,4-diene-1-carboxylate = 2-succinylbenzoate + H2O. It participates in quinol/quinone metabolism; 1,4-dihydroxy-2-naphthoate biosynthesis; 1,4-dihydroxy-2-naphthoate from chorismate: step 4/7. Its pathway is quinol/quinone metabolism; menaquinone biosynthesis. Its function is as follows. Converts 2-succinyl-6-hydroxy-2,4-cyclohexadiene-1-carboxylate (SHCHC) to 2-succinylbenzoate (OSB). This is o-succinylbenzoate synthase from Aliivibrio salmonicida (strain LFI1238) (Vibrio salmonicida (strain LFI1238)).